The primary structure comprises 222 residues: Kinetochore protein Spc25 (222 aa).

The stretch at 51–86 (RHQRKVGKLQKVLMERREELDKRVSFIEELDRELEA) forms a coiled coil.

Belongs to the SPC25 family. Component of the Ndc80 complex, which is composed of Ndc80, Nuf2 and Spc25.

It is found in the nucleus. The protein localises to the chromosome. Its subcellular location is the centromere. It localises to the kinetochore. In terms of biological role, acts as a component of the essential kinetochore-associated Ndc80 complex, which is required for chromosome segregation and spindle checkpoint activity during meiosis and mitosis. Required for kinetochore integrity and the organization of stable microtubule binding sites in the outer plate of the kinetochore. Participates in SAC signaling that responds specifically to disruptions in spindle microtubule dynamics. The NDC80 complex synergistically enhances the affinity of the SKA1 complex for microtubules and may allow the NDC80 complex to track depolymerizing microtubules. The sequence is that of Kinetochore protein Spc25 from Drosophila mauritiana (Fruit fly).